The primary structure comprises 361 residues: Methionine import ATP-binding protein MetN (361 aa).

The ABC transporter domain occupies 22 to 257; the sequence is VRLIDVKRRF…PQTDITRSLL (236 aa). 54-61 is a binding site for ATP; sequence GRSGAGKS.

Belongs to the ABC transporter superfamily. Methionine importer (TC 3.A.1.24) family. As to quaternary structure, the complex is composed of two ATP-binding proteins (MetN), two transmembrane proteins (MetI) and a solute-binding protein (MetQ).

It is found in the cell inner membrane. The catalysed reaction is L-methionine(out) + ATP + H2O = L-methionine(in) + ADP + phosphate + H(+). It carries out the reaction D-methionine(out) + ATP + H2O = D-methionine(in) + ADP + phosphate + H(+). Functionally, part of the ABC transporter complex MetNIQ involved in methionine import. Responsible for energy coupling to the transport system. The chain is Methionine import ATP-binding protein MetN from Rhizobium etli (strain ATCC 51251 / DSM 11541 / JCM 21823 / NBRC 15573 / CFN 42).